The chain runs to 268 residues: Gasdermin bGSDM (268 aa).

Residue Cys-3 is the site of S-palmitoyl cysteine attachment. Beta stranded transmembrane passes span 78–94 (IDLR…AAKI), 103–121 (APSF…FHIE), 168–185 (KMRM…GVDV), and 195–211 (AKLE…RLVF). The interval 248 to 268 (GENMALNLFTEIQDAGFIEVT) is C-terminal region.

The protein belongs to the bacterial gasdermin family. In terms of assembly, monomer in solution. As to quaternary structure, forms large, homooligomeric ring-shaped pores when inserted in membranes. In terms of processing, cleavage by the adjacently encoded protease (G563DRAFT_02009) between Leu-247 and Gly-248 relieves autoinhibition, releasing the N-terminus which initiates loss of cell integrity. Post-translationally, palmitoylation helps stabilize the inactive state; may self-palmitoylate. Palmitoylation is not required for permeabilization of liposomes by the ring-like pores in vitro. Palmitoylation plays a significant role in pore formation.

The protein resides in the cytoplasm. The protein localises to the cell inner membrane. With respect to regulation, the full-length protein before cleavage is inactive: intramolecular interactions between the N-terminal domain and the C-terminal region, as well as the lipid modification, mediate autoinhibition. The pyroptosis-like-inducing activity is carried by the released N-terminal domain (gasdermin bGSDM, N-terminus). Precursor of a pore-forming protein involved in defense against bacteriophages. Cleavage of this precursor by its dedicated, neighboring protease (G563DRAFT_02009) releases the active moiety (gasdermin bGSDM, N-terminus) which inserts into membranes, forming pores and triggering cell death. Expression of bGSDM and its protease is highly toxic in E.coli. Cells expressing the gene pair stop dividing and lose membrane integrity. Both proteins are required to kill E.coli. In terms of biological role, pore-forming protein that causes membrane permeabilization via a pyroptosis-like activity. Makes ring-like pores with walls about 50 Angstroms thick and an interior pore diameter of 200-300 Angstroms, when integrated in liposomes. This Runella zeae (strain ATCC BAA-293 / DSM 19591 / LMG 21438 / NS12) protein is Gasdermin bGSDM.